The sequence spans 178 residues: Inorganic pyrophosphatase (178 aa).

Residues K30, R44, and Y56 each contribute to the substrate site. Residues D66, D71, and D103 each contribute to the Mg(2+) site. Y142 provides a ligand contact to substrate.

The protein belongs to the PPase family. Homohexamer. Mg(2+) serves as cofactor.

The protein localises to the cytoplasm. It carries out the reaction diphosphate + H2O = 2 phosphate + H(+). Its function is as follows. Catalyzes the hydrolysis of inorganic pyrophosphate (PPi) forming two phosphate ions. This is Inorganic pyrophosphatase from Bradyrhizobium diazoefficiens (strain JCM 10833 / BCRC 13528 / IAM 13628 / NBRC 14792 / USDA 110).